The primary structure comprises 316 residues: Short-chain dehydrogenase/reductase family 16C member 6 (316 aa).

Residue Leu-40–Val-64 coordinates NAD(+). Ser-173 provides a ligand contact to substrate. Residue Tyr-186 is the Proton acceptor of the active site.

The protein belongs to the short-chain dehydrogenases/reductases (SDR) family.

The polypeptide is Short-chain dehydrogenase/reductase family 16C member 6 (SDR16C6) (Bos taurus (Bovine)).